Consider the following 181-residue polypeptide: Protein Syd (181 aa).

It belongs to the Syd family.

The protein resides in the cell inner membrane. Its function is as follows. Interacts with the SecY protein in vivo. May bind preferentially to an uncomplexed state of SecY, thus functioning either as a chelating agent for excess SecY in the cell or as a regulatory factor that negatively controls the translocase function. This Escherichia coli O81 (strain ED1a) protein is Protein Syd.